The primary structure comprises 301 residues: MSGAHTISHLSAGLKSVNIGDQQQNEANLNLLQQQLENEATSQTQQSRITQFFAQQPSDGYTLFSHRSAPNGFKVAIILSELELPFNTIFLDFNHGEQRAPEFVTINPNARVPALIDHFNDNTSIWESGAIILYLVSKYLRDNGECALWSDNIVEQSQISSWLFFQTSGHAPMIGQALHFRYFHSCPVPSAVERYTDEVRRVYGVIEMALAERREALIMDLDVENAAAYSAGTTPLSQSRYFDYPVWLVGDRATVADLSFVPWNNVVDRIGINLKVEFPEVYKWTKYMMRRPAVIRALRGD.

One can recognise a GST N-terminal domain in the interval 59–143; the sequence is DGYTLFSHRS…YLVSKYLRDN (85 aa). The GST C-terminal domain occupies 152 to 301; that stretch reads NIVEQSQISS…PAVIRALRGD (150 aa).

The protein belongs to the GST superfamily. As to quaternary structure, homodimer.

Functionally, plays an important role in the cellular response to the nitrogen source. URE2 gene plays a major part in the repression of GLN1 and GDH2 genes by glutamine, and is required for the inactivation of glutamine synthetase. URE2 gene product may catalytically inactivate GLN3 in response to an increase in the intracellular concentration of glutamine. The chain is Protein URE2 (URE2) from Meyerozyma guilliermondii (strain ATCC 6260 / CBS 566 / DSM 6381 / JCM 1539 / NBRC 10279 / NRRL Y-324) (Yeast).